We begin with the raw amino-acid sequence, 211 residues long: N-(5'-phosphoribosyl)anthranilate isomerase (211 aa).

Belongs to the TrpF family.

It carries out the reaction N-(5-phospho-beta-D-ribosyl)anthranilate = 1-(2-carboxyphenylamino)-1-deoxy-D-ribulose 5-phosphate. The protein operates within amino-acid biosynthesis; L-tryptophan biosynthesis; L-tryptophan from chorismate: step 3/5. This is N-(5'-phosphoribosyl)anthranilate isomerase from Pseudomonas aeruginosa (strain UCBPP-PA14).